The chain runs to 113 residues: uncharacterized protein (113 aa).

The N-terminal stretch at 1–29 (MLVVYMCIWVLYLLLFLFLFLFIASPASL) is a signal peptide. The next 2 membrane-spanning stretches (helical) occupy residues 34–54 (THILQCLYYFSLLLISGCAFF) and 56–76 (QVLCLVLPLFCFVLFCFFYFF).

The protein resides in the membrane. This is an uncharacterized protein from Saccharomyces cerevisiae (strain ATCC 204508 / S288c) (Baker's yeast).